Consider the following 325-residue polypeptide: Tetraacyldisaccharide 4'-kinase (325 aa).

Position 53-60 (53-60 (SVGGNGKT)) interacts with ATP.

The protein belongs to the LpxK family.

It carries out the reaction a lipid A disaccharide + ATP = a lipid IVA + ADP + H(+). Its pathway is glycolipid biosynthesis; lipid IV(A) biosynthesis; lipid IV(A) from (3R)-3-hydroxytetradecanoyl-[acyl-carrier-protein] and UDP-N-acetyl-alpha-D-glucosamine: step 6/6. Its function is as follows. Transfers the gamma-phosphate of ATP to the 4'-position of a tetraacyldisaccharide 1-phosphate intermediate (termed DS-1-P) to form tetraacyldisaccharide 1,4'-bis-phosphate (lipid IVA). This is Tetraacyldisaccharide 4'-kinase from Pasteurella multocida (strain Pm70).